The chain runs to 461 residues: Xyloglucan 6-xylosyltransferase 2 (461 aa).

The Cytoplasmic portion of the chain corresponds to 1–20; the sequence is MIERCLGAYRCRRIQRALRQ. A helical; Signal-anchor for type II membrane protein transmembrane segment spans residues 21 to 40; it reads LKVTILCLLLTVVVLRSTIG. Residues 41–461 lie on the Lumenal side of the membrane; sequence AGKFGTPEQD…KAVKVQTNQV (421 aa). The interval 74–95 is disordered; that stretch reads QTGGDSSSGDGGGNSGGSNNYE. An N-linked (GlcNAc...) asparagine glycan is attached at Asn-432.

It belongs to the glycosyltransferase 34 family. Homodimer. Interacts with XXT1 and XXT5. Interacts with FUT1 and XLT2.

It localises to the golgi apparatus membrane. It catalyses the reaction Transfers an alpha-D-xylosyl residue from UDP-D-xylose to a glucose residue in xyloglucan, forming an alpha-(1-&gt;6)-D-xylosyl-D-glucose linkage.. Functionally, xylosyltransferase specific to UDP-D-xylose that accepts both cellopentaose and cellohexaose as substrates, with a better use of cellohexaose, to produce xyloglucan. Adds preferentially the first xylosyl residue to the fourth glucosyl residue from the reducing end of both acceptors. Transfer one xylose mainly to the second glucose residue from the non-reducing end. The acceptor should have a minimum of four glucose residues. Associates with other xyloglucan-synthesizing enzymes to form multiprotein complexes for xyloglucan synthesis in the Golgi. The protein is Xyloglucan 6-xylosyltransferase 2 (XXT2) of Arabidopsis thaliana (Mouse-ear cress).